A 312-amino-acid chain; its full sequence is Ribonuclease H2 subunit B (312 aa).

The residue at position 2 (alanine 2) is an N-acetylalanine. The segment at 236–256 is disordered; it reads EPSASLPNPPSKKIKLSDEPV. Lysine 295 is modified (N6-acetyllysine). Serine 296 bears the Phosphoserine mark.

It belongs to the RNase H2 subunit B family. The RNase H2 complex is a heterotrimer composed of the catalytic subunit RNASEH2A and the non-catalytic subunits RNASEH2B and RNASEH2C. Widely expressed.

Its subcellular location is the nucleus. Its function is as follows. Non catalytic subunit of RNase H2, an endonuclease that specifically degrades the RNA of RNA:DNA hybrids. Participates in DNA replication, possibly by mediating the removal of lagging-strand Okazaki fragment RNA primers during DNA replication. Mediates the excision of single ribonucleotides from DNA:RNA duplexes. The sequence is that of Ribonuclease H2 subunit B (RNASEH2B) from Homo sapiens (Human).